Here is a 257-residue protein sequence, read N- to C-terminus: NAD-dependent protein deacetylase (257 aa).

Residues 3 to 252 (NGECLEGGRK…DLVLNEVKGI (250 aa)) form the Deacetylase sirtuin-type domain. NAD(+)-binding residues include Ala-29, Thr-33, Phe-40, Arg-41, Gln-105, Ile-107, Asp-108, and His-123. Phe-40 serves as a coordination point for nicotinamide. Residues Ile-107 and Asp-108 each contribute to the nicotinamide site. The Proton acceptor role is filled by His-123. The Zn(2+) site is built by Cys-131, Cys-134, Cys-156, and Cys-159. Positions 195, 196, and 220 each coordinate NAD(+).

This sequence belongs to the sirtuin family. Class U subfamily. The cofactor is Zn(2+).

It localises to the cytoplasm. It catalyses the reaction N(6)-acetyl-L-lysyl-[protein] + NAD(+) + H2O = 2''-O-acetyl-ADP-D-ribose + nicotinamide + L-lysyl-[protein]. In terms of biological role, NAD-dependent protein deacetylase which modulates the activities of several enzymes which are inactive in their acetylated form. Deacetylates the N-terminal lysine residue of Alba, the major archaeal chromatin protein and that, in turn, increases Alba's DNA binding affinity, thereby repressing transcription. This Caldivirga maquilingensis (strain ATCC 700844 / DSM 13496 / JCM 10307 / IC-167) protein is NAD-dependent protein deacetylase.